Reading from the N-terminus, the 119-residue chain is Non-specific lipid-transfer protein 11 (119 aa).

Residues 1 to 28 form the signal peptide; the sequence is MRNITTTTRKMLLLVITILLGIAYHGEA. 4 disulfides stabilise this stretch: C31-C78, C41-C55, C56-C101, and C76-C115.

The protein belongs to the plant LTP family.

Functionally, plant non-specific lipid-transfer proteins transfer phospholipids as well as galactolipids across membranes. May play a role in wax or cutin deposition in the cell walls of expanding epidermal cells and certain secretory tissues. In Arabidopsis thaliana (Mouse-ear cress), this protein is Non-specific lipid-transfer protein 11 (LTP11).